The sequence spans 824 residues: Glycogen phosphorylase (824 aa).

Lys-667 carries the post-translational modification N6-(pyridoxal phosphate)lysine.

The protein belongs to the glycogen phosphorylase family. The cofactor is pyridoxal 5'-phosphate.

The catalysed reaction is [(1-&gt;4)-alpha-D-glucosyl](n) + phosphate = [(1-&gt;4)-alpha-D-glucosyl](n-1) + alpha-D-glucose 1-phosphate. In terms of biological role, phosphorylase is an important allosteric enzyme in carbohydrate metabolism. Enzymes from different sources differ in their regulatory mechanisms and in their natural substrates. However, all known phosphorylases share catalytic and structural properties. The sequence is that of Glycogen phosphorylase (glgP) from Chlamydia pneumoniae (Chlamydophila pneumoniae).